A 135-amino-acid polypeptide reads, in one-letter code: UPF0216 protein MTH_949 (135 aa).

Belongs to the UPF0216 family.

This is UPF0216 protein MTH_949 from Methanothermobacter thermautotrophicus (strain ATCC 29096 / DSM 1053 / JCM 10044 / NBRC 100330 / Delta H) (Methanobacterium thermoautotrophicum).